A 284-amino-acid polypeptide reads, in one-letter code: NAD kinase (284 aa).

The Proton acceptor role is filled by aspartate 70. NAD(+) contacts are provided by residues aspartate 70–glycine 71, asparagine 139–glutamate 140, lysine 167, aspartate 169, leucine 177, threonine 180–serine 185, and glutamine 236.

The protein belongs to the NAD kinase family. A divalent metal cation serves as cofactor.

It localises to the cytoplasm. It carries out the reaction NAD(+) + ATP = ADP + NADP(+) + H(+). Its function is as follows. Involved in the regulation of the intracellular balance of NAD and NADP, and is a key enzyme in the biosynthesis of NADP. Catalyzes specifically the phosphorylation on 2'-hydroxyl of the adenosine moiety of NAD to yield NADP. The protein is NAD kinase of Helicobacter pylori (strain J99 / ATCC 700824) (Campylobacter pylori J99).